A 482-amino-acid polypeptide reads, in one-letter code: Pyruvate kinase (482 aa).

Arginine 37 provides a ligand contact to substrate. K(+) contacts are provided by asparagine 39, serine 41, and aspartate 71. An ATP-binding site is contributed by 39-42 (NFSH). Residues arginine 78 and lysine 160 each contribute to the ATP site. Glutamate 222 is a Mg(2+) binding site. 3 residues coordinate substrate: glycine 245, aspartate 246, and threonine 278. Mg(2+) is bound at residue aspartate 246.

Belongs to the pyruvate kinase family. In terms of assembly, homotetramer. It depends on Mg(2+) as a cofactor. The cofactor is K(+).

The enzyme catalyses pyruvate + ATP = phosphoenolpyruvate + ADP + H(+). It functions in the pathway carbohydrate degradation; glycolysis; pyruvate from D-glyceraldehyde 3-phosphate: step 5/5. This Agrobacterium vitis (Rhizobium vitis) protein is Pyruvate kinase (ttuE).